A 514-amino-acid polypeptide reads, in one-letter code: Serine--tRNA ligase, cytoplasmic (514 aa).

Met-1 carries the N-acetylmethionine modification. The interaction with tRNA stretch occupies residues 9 to 61 (RVDKGGDPALIRETQEKRFKDPGLVDQLVKADSEWRRCRFRADNLNKLKNLCS). At Ser-241 the chain carries Phosphoserine. Residues Thr-271 and Arg-302 each contribute to the L-serine site. ATP-binding positions include 302-304 (RQE) and 318-321 (VHQF). N6-acetyllysine is present on Lys-323. L-serine is bound at residue Glu-325. Residue 391-394 (ELVS) participates in ATP binding. Asn-427 contacts L-serine. The disordered stretch occupies residues 471–514 (VKPAPIDQEPSKKQKKQHEGSKKKAAARDVALESRLQNMEVTDA). Positions 479 to 502 (EPSKKQKKQHEGSKKKAAARDVAL) are enriched in basic and acidic residues. Positions 482 to 494 (KKQKKQHEGSKKK) match the Nuclear localization signal motif. Residues 505 to 514 (RLQNMEVTDA) are compositionally biased toward polar residues.

The protein belongs to the class-II aminoacyl-tRNA synthetase family. Type-1 seryl-tRNA synthetase subfamily. Homodimer. The tRNA molecule may bind across the dimer. Interacts with SIRT2. Interacts with METTL6; interaction is required for the tRNA N(3)-methylcytidine methyltransferase activity of METTL6.

The protein localises to the cytoplasm. It is found in the nucleus. It catalyses the reaction tRNA(Ser) + L-serine + ATP = L-seryl-tRNA(Ser) + AMP + diphosphate + H(+). It carries out the reaction tRNA(Sec) + L-serine + ATP = L-seryl-tRNA(Sec) + AMP + diphosphate + H(+). It functions in the pathway aminoacyl-tRNA biosynthesis; selenocysteinyl-tRNA(Sec) biosynthesis; L-seryl-tRNA(Sec) from L-serine and tRNA(Sec): step 1/1. In terms of biological role, catalyzes the attachment of serine to tRNA(Ser) in a two-step reaction: serine is first activated by ATP to form Ser-AMP and then transferred to the acceptor end of tRNA(Ser). Is probably also able to aminoacylate tRNA(Sec) with serine, to form the misacylated tRNA L-seryl-tRNA(Sec), which will be further converted into selenocysteinyl-tRNA(Sec). In the nucleus, binds to the VEGFA core promoter and prevents MYC binding and transcriptional activation by MYC. Recruits SIRT2 to the VEGFA promoter, promoting deacetylation of histone H4 at 'Lys-16' (H4K16). Thereby, inhibits the production of VEGFA and sprouting angiogenesis mediated by VEGFA. In Macaca fascicularis (Crab-eating macaque), this protein is Serine--tRNA ligase, cytoplasmic (SARS1).